A 745-amino-acid chain; its full sequence is Inhibitor of nuclear factor kappa-B kinase subunit alpha (745 aa).

The Protein kinase domain maps to 15–302 (WEMRERLGTG…LTLKQPRCFV (288 aa)). Residues 21 to 29 (LGTGGFGNV) and K44 each bind ATP. T23 bears the Phosphothreonine; by PKB/AKT1 and SGK1 mark. D144 (proton acceptor) is an active-site residue. S176 carries the post-translational modification Phosphoserine; by MAP3K14. T179 is modified ((Microbial infection) O-acetylthreonine; by Yersinia YopJ). The residue at position 180 (S180) is a Phosphoserine; by SGK1. The interval 455–476 (LLRYNANLTKMKNTLISASQQL) is leucine-zipper. Positions 738–743 (LDWSWL) are NEMO-binding.

The protein belongs to the protein kinase superfamily. Ser/Thr protein kinase family. I-kappa-B kinase subfamily. In terms of assembly, component of the I-kappa-B-kinase (IKK) core complex consisting of CHUK, IKBKB and IKBKG; probably four alpha/CHUK-beta/IKBKB dimers are associated with four gamma/IKBKG subunits. The IKK core complex seems to associate with regulatory or adapter proteins to form a IKK-signalosome holo-complex. The IKK complex associates with TERF2IP/RAP1, leading to promote IKK-mediated phosphorylation of RELA/p65. Part of a complex composed of NCOA2, NCOA3, CHUK/IKKA, IKBKB, IKBKG and CREBBP. Part of a 70-90 kDa complex at least consisting of CHUK/IKKA, IKBKB, NFKBIA, RELA, ELP1 and MAP3K14. Directly interacts with TRPC4AP. May interact with TRAF2. Interacts with NALP2. May interact with MAVS/IPS1. Interacts with ARRB1 and ARRB2. Interacts with NLRC5; prevents CHUK phosphorylation and kinase activity. Interacts with PIAS1; this interaction induces PIAS1 phosphorylation. Interacts with ZNF268 isoform 2; the interaction is further increased in a TNF-alpha-dependent manner. Interacts with FOXO3. Interacts with IFIT5; the interaction synergizes the recruitment of IKK to MAP3K7 and enhances IKK phosphorylation. Interacts with LRRC14. Interacts with SASH1. Directly interacts with DDX3X after the physiological activation of the TLR7 and TLR8 pathways; this interaction enhances CHUK autophosphorylation. As to quaternary structure, (Microbial infection) Interacts with InlC of Listeria monocytogenes. Phosphorylated by MAP3K14/NIK, AKT and to a lesser extent by MEKK1, and dephosphorylated by PP2A. Autophosphorylated. In terms of processing, ubiquitinated by TRIM56 via 'Lys-63'-linked ubiquitination, promoting activation of CHUK/IKKA. Post-translationally, (Microbial infection) Acetylation of Thr-179 by Yersinia YopJ prevents phosphorylation and activation, thus blocking the I-kappa-B signaling pathway. In terms of tissue distribution, widely expressed.

The protein resides in the cytoplasm. The protein localises to the nucleus. It carries out the reaction L-seryl-[I-kappa-B protein] + ATP = O-phospho-L-seryl-[I-kappa-B protein] + ADP + H(+). With respect to regulation, activated when phosphorylated and inactivated when dephosphorylated. In terms of biological role, serine kinase that plays an essential role in the NF-kappa-B signaling pathway which is activated by multiple stimuli such as inflammatory cytokines, bacterial or viral products, DNA damages or other cellular stresses. Acts as a part of the canonical IKK complex in the conventional pathway of NF-kappa-B activation and phosphorylates inhibitors of NF-kappa-B on serine residues. These modifications allow polyubiquitination of the inhibitors and subsequent degradation by the proteasome. In turn, free NF-kappa-B is translocated into the nucleus and activates the transcription of hundreds of genes involved in immune response, growth control, or protection against apoptosis. Negatively regulates the pathway by phosphorylating the scaffold protein TAXBP1 and thus promoting the assembly of the A20/TNFAIP3 ubiquitin-editing complex (composed of A20/TNFAIP3, TAX1BP1, and the E3 ligases ITCH and RNF11). Therefore, CHUK plays a key role in the negative feedback of NF-kappa-B canonical signaling to limit inflammatory gene activation. As part of the non-canonical pathway of NF-kappa-B activation, the MAP3K14-activated CHUK/IKKA homodimer phosphorylates NFKB2/p100 associated with RelB, inducing its proteolytic processing to NFKB2/p52 and the formation of NF-kappa-B RelB-p52 complexes. In turn, these complexes regulate genes encoding molecules involved in B-cell survival and lymphoid organogenesis. Also participates in the negative feedback of the non-canonical NF-kappa-B signaling pathway by phosphorylating and destabilizing MAP3K14/NIK. Within the nucleus, phosphorylates CREBBP and consequently increases both its transcriptional and histone acetyltransferase activities. Modulates chromatin accessibility at NF-kappa-B-responsive promoters by phosphorylating histones H3 at 'Ser-10' that are subsequently acetylated at 'Lys-14' by CREBBP. Additionally, phosphorylates the CREBBP-interacting protein NCOA3. Also phosphorylates FOXO3 and may regulate this pro-apoptotic transcription factor. Phosphorylates RIPK1 at 'Ser-25' which represses its kinase activity and consequently prevents TNF-mediated RIPK1-dependent cell death. Phosphorylates AMBRA1 following mitophagy induction, promoting AMBRA1 interaction with ATG8 family proteins and its mitophagic activity. This chain is Inhibitor of nuclear factor kappa-B kinase subunit alpha (CHUK), found in Homo sapiens (Human).